A 363-amino-acid chain; its full sequence is Chorismate synthase (363 aa).

NADP(+)-binding residues include Arg-48 and Arg-54. Residues 131 to 133, 244 to 245, Gly-288, 303 to 307, and Arg-329 contribute to the FMN site; these read RSS, NA, and KPTSS.

Belongs to the chorismate synthase family. Homotetramer. Requires FMNH2 as cofactor.

The catalysed reaction is 5-O-(1-carboxyvinyl)-3-phosphoshikimate = chorismate + phosphate. It functions in the pathway metabolic intermediate biosynthesis; chorismate biosynthesis; chorismate from D-erythrose 4-phosphate and phosphoenolpyruvate: step 7/7. Its function is as follows. Catalyzes the anti-1,4-elimination of the C-3 phosphate and the C-6 proR hydrogen from 5-enolpyruvylshikimate-3-phosphate (EPSP) to yield chorismate, which is the branch point compound that serves as the starting substrate for the three terminal pathways of aromatic amino acid biosynthesis. This reaction introduces a second double bond into the aromatic ring system. The sequence is that of Chorismate synthase from Hyphomonas neptunium (strain ATCC 15444).